Reading from the N-terminus, the 1440-residue chain is Pentatricopeptide repeat-containing protein At3g18110, chloroplastic (1440 aa).

Residues 1–44 constitute a chloroplast transit peptide; that stretch reads MAVSAGALAFPALSVRATLNPEIKDEQANISSTTSSSQKFTYSR. Residues 63–72 are compositionally biased toward polar residues; the sequence is TPSQTLSSPV. The disordered stretch occupies residues 63–84; sequence TPSQTLSSPVSPIAGTPDSGDV. PPR repeat units follow at residues 224 to 258, 259 to 295, 296 to 330, 331 to 365, 366 to 400, 401 to 431, 437 to 471, 472 to 506, 507 to 541, 542 to 572, 608 to 638, 643 to 678, 680 to 714, 715 to 749, 751 to 785, 786 to 820, 821 to 855, 856 to 890, 891 to 925, 926 to 960, 961 to 995, 996 to 1030, 1031 to 1065, 1066 to 1100, and 1101 to 1135; these read RVQV…GCVP, DLIS…GLRP, DAIT…RCQP, DLWT…GFFP, DAVT…GFGK, DEMT…MKGL, DAIT…GIKP, TLQT…GTKP, DNLA…GHTP, SYTL…MEEL, ENDT…LKEH, KRLI…GWCF, SSTM…GCEA, SESV…GFHF, CSPM…GRTP, DLKT…GPSP, TVES…GFKI, SKSS…GYLP, TIRL…NFKV, ELAI…GLEP, DETT…GLDP, KLDT…GLKL, DRSF…GIEP, TLAT…EVEL, and TTLP…GLEP. Residues 1419 to 1440 form a disordered region; sequence KKKKMGNETNGINTRRKFVRSK.

The protein belongs to the PPR family. P subfamily.

It localises to the plastid. It is found in the chloroplast. May play a role in embryogenesis. This chain is Pentatricopeptide repeat-containing protein At3g18110, chloroplastic (EMB1270), found in Arabidopsis thaliana (Mouse-ear cress).